A 706-amino-acid polypeptide reads, in one-letter code: Ribosomal RNA large subunit methyltransferase K/L (706 aa).

One can recognise a THUMP domain in the interval 43–154; that stretch reads LMYQSLLWSR…RDMASVALDL (112 aa).

The protein belongs to the methyltransferase superfamily. RlmKL family.

The protein localises to the cytoplasm. The catalysed reaction is guanosine(2445) in 23S rRNA + S-adenosyl-L-methionine = N(2)-methylguanosine(2445) in 23S rRNA + S-adenosyl-L-homocysteine + H(+). It catalyses the reaction guanosine(2069) in 23S rRNA + S-adenosyl-L-methionine = N(2)-methylguanosine(2069) in 23S rRNA + S-adenosyl-L-homocysteine + H(+). Functionally, specifically methylates the guanine in position 2445 (m2G2445) and the guanine in position 2069 (m7G2069) of 23S rRNA. The protein is Ribosomal RNA large subunit methyltransferase K/L of Yersinia pestis bv. Antiqua (strain Antiqua).